The primary structure comprises 338 residues: Ketol-acid reductoisomerase (NADP(+)) (338 aa).

The region spanning 1–181 is the KARI N-terminal Rossmann domain; sequence MKVFYDKDAD…GGGRAGIIET (181 aa). Residues 24-27, arginine 47, and serine 52 each bind NADP(+); that span reads YGSQ. Histidine 107 is a catalytic residue. NADP(+) is bound at residue glycine 133. Positions 182–327 constitute a KARI C-terminal knotted domain; the sequence is NFREETETDL…EKLRAMMPWI (146 aa). The Mg(2+) site is built by aspartate 190, glutamate 194, glutamate 226, and glutamate 230. Position 251 (serine 251) interacts with substrate.

This sequence belongs to the ketol-acid reductoisomerase family. Requires Mg(2+) as cofactor.

The catalysed reaction is (2R)-2,3-dihydroxy-3-methylbutanoate + NADP(+) = (2S)-2-acetolactate + NADPH + H(+). It carries out the reaction (2R,3R)-2,3-dihydroxy-3-methylpentanoate + NADP(+) = (S)-2-ethyl-2-hydroxy-3-oxobutanoate + NADPH + H(+). The protein operates within amino-acid biosynthesis; L-isoleucine biosynthesis; L-isoleucine from 2-oxobutanoate: step 2/4. Its pathway is amino-acid biosynthesis; L-valine biosynthesis; L-valine from pyruvate: step 2/4. Its function is as follows. Involved in the biosynthesis of branched-chain amino acids (BCAA). Catalyzes an alkyl-migration followed by a ketol-acid reduction of (S)-2-acetolactate (S2AL) to yield (R)-2,3-dihydroxy-isovalerate. In the isomerase reaction, S2AL is rearranged via a Mg-dependent methyl migration to produce 3-hydroxy-3-methyl-2-ketobutyrate (HMKB). In the reductase reaction, this 2-ketoacid undergoes a metal-dependent reduction by NADPH to yield (R)-2,3-dihydroxy-isovalerate. The sequence is that of Ketol-acid reductoisomerase (NADP(+)) from Cupriavidus taiwanensis (strain DSM 17343 / BCRC 17206 / CCUG 44338 / CIP 107171 / LMG 19424 / R1) (Ralstonia taiwanensis (strain LMG 19424)).